The primary structure comprises 176 residues: Putative REP-associated tyrosine transposase (176 aa).

Positions 59 and 61 each coordinate Mg(2+). The active-site Nucleophile is the tyrosine 148.

This sequence belongs to the transposase 17 family. RAYT subfamily. Homodimer. Mg(2+) serves as cofactor.

Its function is as follows. Transposase responsible for transposition an insertion sequence (IS) element. Transposition occurs in 2 main steps, excision from the donor DNA 'top strand' into a single strand circle and its subsequent reinsertion into the DNA target. This increases the copy number of the IS. In Haemophilus influenzae (strain ATCC 51907 / DSM 11121 / KW20 / Rd), this protein is Putative REP-associated tyrosine transposase.